The sequence spans 1501 residues: Multidrug resistance protein CDR1 (1501 aa).

The tract at residues 1 to 30 (MSDSKMSSQDESKLEKAISQDSSSENHSIN) is disordered. The Cytoplasmic segment spans residues 1–513 (MSDSKMSSQD…NFLRMKGDPS (513 aa)). Basic and acidic residues predominate over residues 8 to 18 (SQDESKLEKAI). The ABC transporter 1 domain maps to 150–404 (LATEGFRHFQ…FEKMGWKCPQ (255 aa)). Residues 514–534 (IPIFSVFGQLVMGLILSSVFY) traverse the membrane as a helical segment. A glycan (N-linked (GlcNAc...) asparagine) is linked at asparagine 535. Transmembrane regions (helical) follow at residues 549-569 (AMFFAVLFNAFSSLLEIMSLF), 598-618 (LPVKLAMSMSFNFVFYFMVNF), 623-643 (GRFFFYWLMCIWCTFVMSHLF), and 655-675 (GAMTPATVLLLAMVIYTGFVI). Asparagine 724 carries an N-linked (GlcNAc...) asparagine glycan. The helical transmembrane segment at 765–785 (LGITIGFAVFFLAIYIALTEF) threads the bilayer. Over 786–1195 (NKGAMQKGEI…TIVQDWRSPG (410 aa)) the chain is Cytoplasmic. The 245-residue stretch at 859-1103 (FFWRDLTYQV…MINYFEKYGA (245 aa)) folds into the ABC transporter 2 domain. 895-902 (GASGAGKT) contributes to the ATP binding site. 6 consecutive transmembrane segments (helical) span residues 1196–1216 (YIYSKIFLVVSAALFNGFSFF), 1230–1250 (FSVFMFFIPFNTLVQQMLPYF), 1281–1301 (IPYQVAVGTIAFFCWYYPLGL), 1315–1335 (GVLMWMLVTAFYVYTATMGQL), 1356–1376 (MCLNFCGVLAGPDVLPGFWIF), and 1467–1487 (FGIFIAFIAINIILTVIFYWL).

This sequence belongs to the ABC transporter superfamily. ABCG family. PDR (TC 3.A.1.205) subfamily.

It is found in the membrane. Functionally, transporter, whose physiological function is not yet established. Confers resistance to the chemical cycloheximide. The polypeptide is Multidrug resistance protein CDR1 (CDR1) (Candida albicans (Yeast)).